The primary structure comprises 462 residues: Protein phosphatase 1M (462 aa).

A compositionally biased stretch (basic residues) spans 1–10 (MSAGWFRRRF). The interval 1-66 (MSAGWFRRRF…PVRSPARGRT (66 aa)) is disordered. Residues 100 to 452 (EFGIEEDQEW…DDVSVFVIPL (353 aa)) enclose the PPM-type phosphatase domain. Mn(2+)-binding residues include Asp-127 and Gly-128.

Belongs to the PP2C family. Requires Mg(2+) as cofactor. It depends on Mn(2+) as a cofactor. Widely expressed with highest levels in testis and lower levels in lung, kidney and brain.

The protein resides in the nucleus. It catalyses the reaction O-phospho-L-seryl-[protein] + H2O = L-seryl-[protein] + phosphate. It carries out the reaction O-phospho-L-threonyl-[protein] + H2O = L-threonyl-[protein] + phosphate. The polypeptide is Protein phosphatase 1M (Mus musculus (Mouse)).